Consider the following 149-residue polypeptide: 3-dehydroquinate dehydratase (149 aa).

Tyr-26 (proton acceptor) is an active-site residue. Residues Asn-78, His-84, and Asp-91 each contribute to the substrate site. His-104 functions as the Proton donor in the catalytic mechanism. Residues Leu-105–Ser-106 and Arg-115 contribute to the substrate site.

This sequence belongs to the type-II 3-dehydroquinase family. Homododecamer.

It catalyses the reaction 3-dehydroquinate = 3-dehydroshikimate + H2O. Its pathway is metabolic intermediate biosynthesis; chorismate biosynthesis; chorismate from D-erythrose 4-phosphate and phosphoenolpyruvate: step 3/7. Its function is as follows. Catalyzes a trans-dehydration via an enolate intermediate. The polypeptide is 3-dehydroquinate dehydratase (Polynucleobacter necessarius subsp. necessarius (strain STIR1)).